The chain runs to 124 residues: Glycine cleavage system H protein (124 aa).

One can recognise a Lipoyl-binding domain in the interval 22–104; it reads LIVTGISDHA…YGKGWIYKMK (83 aa). K63 carries the post-translational modification N6-lipoyllysine.

The protein belongs to the GcvH family. As to quaternary structure, the glycine cleavage system is composed of four proteins: P, T, L and H. (R)-lipoate serves as cofactor.

Functionally, the glycine cleavage system catalyzes the degradation of glycine. The H protein shuttles the methylamine group of glycine from the P protein to the T protein. This is Glycine cleavage system H protein from Acinetobacter baylyi (strain ATCC 33305 / BD413 / ADP1).